A 445-amino-acid chain; its full sequence is Membrane protein insertase YidC (445 aa).

5 helical membrane passes run 6 to 26 (VVAILLAILPIFLFAVEPIKV), 248 to 268 (FGWAIMLFTLIVRLILYPLYH), 313 to 333 (ASGCLMLLIQLPIFMLLWSVI), 352 to 372 (LSAGGFSNNWLFLVITIVASY), and 388 to 408 (GIIMSVIFPFLFVGLPSGLFL).

The protein belongs to the OXA1/ALB3/YidC family. Type 1 subfamily. As to quaternary structure, interacts with the Sec translocase complex via SecD. Specifically interacts with transmembrane segments of nascent integral membrane proteins during membrane integration.

The protein resides in the cell inner membrane. In terms of biological role, required for the insertion and/or proper folding and/or complex formation of integral membrane proteins into the membrane. Involved in integration of membrane proteins that insert both dependently and independently of the Sec translocase complex, as well as at least some lipoproteins. Aids folding of multispanning membrane proteins. The protein is Membrane protein insertase YidC of Thermotoga maritima (strain ATCC 43589 / DSM 3109 / JCM 10099 / NBRC 100826 / MSB8).